The chain runs to 112 residues: MKKIDAIIKPFKLDDVREALAEVGITGMTVTEVKGFGRQKGHTELYRGAEYMVDFLPKVKIEIVVTDDIVDTCVDTIIRTAQTGKIGDGKIFVFDVARVIRIRTGEEDDAAI.

O-UMP-tyrosine is present on tyrosine 51.

This sequence belongs to the P(II) protein family. In terms of assembly, homotrimer.

In terms of biological role, in nitrogen-limiting conditions, when the ratio of Gln to 2-ketoglutarate decreases, P-II is uridylylated to P-II-UMP. P-II-UMP allows the deadenylation of glutamine synthetase (GS), thus activating the enzyme. Conversely, in nitrogen excess P-II is deuridylated and promotes the adenylation of GS. P-II indirectly controls the transcription of the GS gene (glnA). P-II prevents NR-II-catalyzed conversion of NR-I to NR-I-phosphate, the transcriptional activator of glnA. When P-II is uridylylated to P-II-UMP, these events are reversed. The sequence is that of Nitrogen regulatory protein P-II (glnB) from Klebsiella oxytoca.